The primary structure comprises 458 residues: MSITKEFDTITAISTPLGEGAIGIVRLSGTDALAIAQSVFKGKNLEQVASHTINYGHIIDPKTGTIIDEVMVSVMLAPKTFTRENVVEINTHGGIAVTNEILQLLIRQGARMAEPGEFTKRAFLNGRVDLTQAEAVMDIIRAKTDKAMTIAVKQLDGSLSQLINDTRQEILNTLAQVEVNIDYPEYDDVEEMTTALLREKTQEFQSLLENLLRTAKRGKILREGLSTAIIGRPNVGKSSLLNNLLREDKAIVTDIAGTTRDVIEEYVNIKGVPLKLVDTAGIRETDDLVEQIGVERSKKALQESDLVLLVLNASEKLTDQDRALLNLSQDSNRIILLNKTDLEQKIELEQLPDDYIPISVLTNQNINLIEDRINQLFFDNAGLVEQDATYLSNARHISLIEKAVQSLEAVNDGLALGMPVDLLQVDLTRTWEILGEITGDAAPDELITQLFSQFCLGK.

(6S)-5-formyl-5,6,7,8-tetrahydrofolate-binding residues include Arg26, Glu88, and Arg127. Residues 224 to 378 enclose the TrmE-type G domain; the sequence is GLSTAIIGRP…IEDRINQLFF (155 aa). K(+) is bound at residue Asn234. Residues 234-239, 253-259, and 278-281 contribute to the GTP site; these read NVGKSS, TDIAGTT, and DTAG. A Mg(2+)-binding site is contributed by Ser238. Thr253, Ile255, and Thr258 together coordinate K(+). Thr259 contributes to the Mg(2+) binding site. Lys458 is a binding site for (6S)-5-formyl-5,6,7,8-tetrahydrofolate.

The protein belongs to the TRAFAC class TrmE-Era-EngA-EngB-Septin-like GTPase superfamily. TrmE GTPase family. In terms of assembly, homodimer. Heterotetramer of two MnmE and two MnmG subunits. Requires K(+) as cofactor.

It is found in the cytoplasm. Functionally, exhibits a very high intrinsic GTPase hydrolysis rate. Involved in the addition of a carboxymethylaminomethyl (cmnm) group at the wobble position (U34) of certain tRNAs, forming tRNA-cmnm(5)s(2)U34. The polypeptide is tRNA modification GTPase MnmE (Streptococcus pyogenes serotype M6 (strain ATCC BAA-946 / MGAS10394)).